Consider the following 266-residue polypeptide: Beta-lactamase OXA-19 (266 aa).

Positions Met1 to Ser20 are cleaved as a signal peptide. The active-site Acyl-ester intermediate is Ser67. The residue at position 70 (Lys70) is an N6-carboxylysine. Substrate is bound at residue Lys205–Gly207.

This sequence belongs to the class-D beta-lactamase family.

The catalysed reaction is a beta-lactam + H2O = a substituted beta-amino acid. The chain is Beta-lactamase OXA-19 (bla) from Pseudomonas aeruginosa.